The sequence spans 160 residues: Nucleotide-binding protein Ping_2261 (160 aa).

The protein belongs to the YajQ family.

Nucleotide-binding protein. This Psychromonas ingrahamii (strain DSM 17664 / CCUG 51855 / 37) protein is Nucleotide-binding protein Ping_2261.